Here is a 102-residue protein sequence, read N- to C-terminus: NADH-quinone oxidoreductase subunit K (102 aa).

A run of 3 helical transmembrane segments spans residues 6–26 (LEHGLIVATILFALGFYGVMV), 30–50 (LLFMLMSLEIMMNAAALAFVL), and 62–82 (IMFILILTLAAAEACIGLAIV).

This sequence belongs to the complex I subunit 4L family. In terms of assembly, NDH-1 is composed of 14 different subunits. Subunits NuoA, H, J, K, L, M, N constitute the membrane sector of the complex.

Its subcellular location is the cell inner membrane. The enzyme catalyses a quinone + NADH + 5 H(+)(in) = a quinol + NAD(+) + 4 H(+)(out). Its function is as follows. NDH-1 shuttles electrons from NADH, via FMN and iron-sulfur (Fe-S) centers, to quinones in the respiratory chain. The immediate electron acceptor for the enzyme in this species is believed to be ubiquinone. Couples the redox reaction to proton translocation (for every two electrons transferred, four hydrogen ions are translocated across the cytoplasmic membrane), and thus conserves the redox energy in a proton gradient. This chain is NADH-quinone oxidoreductase subunit K, found in Acinetobacter baylyi (strain ATCC 33305 / BD413 / ADP1).